Consider the following 317-residue polypeptide: Annexin D2 (317 aa).

A2 carries the post-translational modification N-acetylalanine. Annexin repeat units lie at residues 11-82 (PLPE…LWTL), 83-154 (DPPE…PLVS), 166-238 (MLAR…AVIT), and 242-313 (YPEK…ALLG). Residues F24, G26, G28, and E68 each contribute to the Ca(2+) site. Phosphoserine is present on S95. Phosphothreonine occurs at positions 100 and 112. Residue Y129 is modified to Phosphotyrosine. Residues I255 and G259 each coordinate Ca(2+). Position 284 is a phosphotyrosine (Y284). Residue S289 is modified to Phosphoserine. Ca(2+)-binding residues include D299, T300, and E305.

Belongs to the annexin (TC 1.A.31.1) family. As to expression, expressed mainly in roots and flowers. Low in stems and bearly detectable in leaves.

Its subcellular location is the cytoplasm. It localises to the cytosol. The protein resides in the membrane. May mediate regulated, targeted secretion of Golgi-derived vesicles during seedling development. The sequence is that of Annexin D2 (ANN2) from Arabidopsis thaliana (Mouse-ear cress).